The chain runs to 407 residues: (R)-phenyllactyl-CoA dehydratase alpha subunit (407 aa).

Positions Met-1 to Arg-4 are excised as a propeptide.

This sequence belongs to the FldB/FldC dehydratase alpha/beta subunit family. As to quaternary structure, part of the heterotrimeric phenyllactate dehydratase complex FldABC, composed of (R)-phenyllactate CoA-transferase (FldA) and a heterodimeric (R)-phenyllactyl-CoA dehydratase (FldB and FldC). [4Fe-4S] cluster is required as a cofactor. Requires No flavin could be detected in the FldABC complex, and the addition of FAD, FMN or riboflavin to the dehydratase do not increase enzymatic activity. as cofactor.

It carries out the reaction (R)-3-phenyllactoyl-CoA = (E)-cinnamoyl-CoA + H2O. The catalysed reaction is (R)-3-(4-hydroxyphenyl)lactoyl-CoA = (E)-4-coumaroyl-CoA + H2O. It catalyses the reaction (R)-3-(indol-3-yl)lactoyl-CoA = (E)-3-(indol-3-yl)acryloyl-CoA + H2O. It participates in amino-acid degradation; L-phenylalanine degradation. Its function is as follows. Component of the phenyllactate dehydratase complex FldABC that is involved in the fermentation of L-phenylalanine via a Stickland reaction. This complex catalyzes the reversible syn-dehydration of (R)-phenyllactate to (E)-cinnamate in two steps, a CoA-transfer from cinnamoyl-CoA to phenyllactate, catalyzed by FldA, followed by the dehydration of phenyllactyl-CoA to cinnamoyl-CoA, catalyzed by FldB and FldC. Requires the activator FldI to initiate catalysis. The polypeptide is (R)-phenyllactyl-CoA dehydratase alpha subunit (Clostridium sporogenes).